Reading from the N-terminus, the 401-residue chain is Elongation factor Tu (401 aa).

Residues 10-211 (KPHLNVGTIG…ALDTFVPNPK (202 aa)) form the tr-type G domain. The G1 stretch occupies residues 19 to 26 (GHVDHGKT). 19–26 (GHVDHGKT) is a binding site for GTP. Thr26 contacts Mg(2+). The interval 62–66 (GITIA) is G2. The interval 83–86 (DCPG) is G3. Residues 83 to 87 (DCPGH) and 138 to 141 (NKAD) each bind GTP. A G4 region spans residues 138–141 (NKAD). Positions 179-181 (SAV) are G5.

The protein belongs to the TRAFAC class translation factor GTPase superfamily. Classic translation factor GTPase family. EF-Tu/EF-1A subfamily. Monomer.

It is found in the cytoplasm. It catalyses the reaction GTP + H2O = GDP + phosphate + H(+). GTP hydrolase that promotes the GTP-dependent binding of aminoacyl-tRNA to the A-site of ribosomes during protein biosynthesis. In Leptospira borgpetersenii serovar Hardjo-bovis (strain JB197), this protein is Elongation factor Tu.